The chain runs to 112 residues: Elongin-C (112 aa).

Belongs to the SKP1 family. As to quaternary structure, heterotrimer of an A (ELOA, ELOA2 or ELOA3P), ELOB and ELOC subunit. The elongin BC complex interacts with EPOP; leading to recruit the elongin BC complex to Polycomb group (PcG) target genes, thereby restricting excessive activity of the PRC2/EED-EZH2 complex. Component of multiple cullin-RING E3 ubiquitin-protein ligase complexes composed of Elongin BC (ELOB and ELOC), a cullin (CUL2 or CUL5), a catalytic subunit (RBX1 or RNF7/RBX2), as well as a substrate adapter protein that can be either ASB2, ASB9, ASB11, KLHDC2, KLHDC3, KLHDC10, APPBP2, FEM1A, FEM1B, FEM1C, LRR1, PCMTD1, SOCS1, SOCS2, SOCS5, SPSB1, SPSB3, ELOA, VHL, WSB1, ZYG11B or RAB40C. Interacts with TMF1. As part of the Elongin BC E3 ubiquitin ligase complex; interacts with NRBP1. May form oligomers as a KLHDC2/KLHDC3-ELOB-ELOC complex; this interaction is autoinhibitory for the E3 ligase complex as the substrate-binding site of KLHDC2/KLHDC3 is blocked in the oligomer. Ubiquitinated by the DCX(AMBRA1) complex, leading to its degradation by the proteasome.

Its subcellular location is the nucleus. Its pathway is protein modification; protein ubiquitination. Functionally, SIII, also known as elongin, is a general transcription elongation factor that increases the RNA polymerase II transcription elongation past template-encoded arresting sites. Subunit A is transcriptionally active and its transcription activity is strongly enhanced by binding to the dimeric complex of the SIII regulatory subunits B and C (elongin BC complex). In embryonic stem cells, the elongin BC complex is recruited by EPOP to Polycomb group (PcG) target genes in order generate genomic region that display both active and repressive chromatin properties, an important feature of pluripotent stem cells. Its function is as follows. Core component of multiple cullin-RING-based ECS (ElonginB/C-CUL2/5-SOCS-box protein) E3 ubiquitin-protein ligase complexes, which mediate the ubiquitination of target proteins. By binding to BC-box motifs it seems to link target recruitment subunits, like VHL and members of the SOCS box family, to Cullin/RBX1 modules that activate E2 ubiquitination enzymes. Component the von Hippel-Lindau ubiquitination complex CBC(VHL). A number of ECS complexes (containing either KLHDC2, KLHDC3, KLHDC10, APPBP2, FEM1A, FEM1B or FEM1C as substrate-recognition component) are part of the DesCEND (destruction via C-end degrons) pathway, which recognizes a C-degron located at the extreme C terminus of target proteins, leading to their ubiquitination and degradation. The ECS(ASB9) complex mediates ubiquitination and degradation of CKB. As part of a multisubunit ubiquitin ligase complex, polyubiquitinates monoubiquitinated POLR2A. ECS(LRR1) ubiquitinates MCM7 and promotes CMG replisome disassembly by VCP and chromatin extraction during S-phase. As part of the ECS(RAB40C) complex, mediates ANKRD28 ubiquitination and degradation, thereby inhibiting protein phosphatase 6 (PP6) complex activity and focal adhesion assembly during cell migration. In Bos taurus (Bovine), this protein is Elongin-C (ELOC).